The sequence spans 213 residues: Uracil phosphoribosyltransferase (213 aa).

5-phospho-alpha-D-ribose 1-diphosphate contacts are provided by residues Arg-78, Arg-103, and 130-138 (DPMLATGGS). Uracil-binding positions include Ile-193 and 198–200 (GDA). Residue Asp-199 coordinates 5-phospho-alpha-D-ribose 1-diphosphate.

It belongs to the UPRTase family. Mg(2+) serves as cofactor.

It catalyses the reaction UMP + diphosphate = 5-phospho-alpha-D-ribose 1-diphosphate + uracil. The protein operates within pyrimidine metabolism; UMP biosynthesis via salvage pathway; UMP from uracil: step 1/1. Its activity is regulated as follows. Allosterically activated by GTP. Catalyzes the conversion of uracil and 5-phospho-alpha-D-ribose 1-diphosphate (PRPP) to UMP and diphosphate. In Bordetella bronchiseptica (strain ATCC BAA-588 / NCTC 13252 / RB50) (Alcaligenes bronchisepticus), this protein is Uracil phosphoribosyltransferase.